The chain runs to 278 residues: 4-hydroxy-tetrahydrodipicolinate reductase (278 aa).

NAD(+) contacts are provided by residues 16 to 21 and glutamate 42; that span reads GAGGRM. Arginine 43 contacts NADP(+). NAD(+) is bound by residues 106–108 and 130–133; these read GTT and AGNY. Residue histidine 163 is the Proton donor/acceptor of the active site. Histidine 164 serves as a coordination point for (S)-2,3,4,5-tetrahydrodipicolinate. The Proton donor role is filled by lysine 167. 173–174 is a (S)-2,3,4,5-tetrahydrodipicolinate binding site; it reads GT.

This sequence belongs to the DapB family.

The protein resides in the cytoplasm. It carries out the reaction (S)-2,3,4,5-tetrahydrodipicolinate + NAD(+) + H2O = (2S,4S)-4-hydroxy-2,3,4,5-tetrahydrodipicolinate + NADH + H(+). It catalyses the reaction (S)-2,3,4,5-tetrahydrodipicolinate + NADP(+) + H2O = (2S,4S)-4-hydroxy-2,3,4,5-tetrahydrodipicolinate + NADPH + H(+). It participates in amino-acid biosynthesis; L-lysine biosynthesis via DAP pathway; (S)-tetrahydrodipicolinate from L-aspartate: step 4/4. Catalyzes the conversion of 4-hydroxy-tetrahydrodipicolinate (HTPA) to tetrahydrodipicolinate. This chain is 4-hydroxy-tetrahydrodipicolinate reductase, found in Psychrobacter arcticus (strain DSM 17307 / VKM B-2377 / 273-4).